A 166-amino-acid chain; its full sequence is Plastocyanin, chloroplastic (166 aa).

The N-terminal 67 residues, 1–67, are a transit peptide targeting the chloroplast; it reads MASLTSAAVT…GAVLASNALA (67 aa). The Plastocyanin-like domain occupies 68 to 166; sequence VEVLLGGSDG…AGMAGKITVN (99 aa). 4 residues coordinate Cu cation: His-104, Cys-151, His-154, and Met-159.

The protein belongs to the plastocyanin family. Requires Cu(2+) as cofactor.

Its subcellular location is the plastid. It is found in the chloroplast thylakoid membrane. Functionally, participates in electron transfer between P700 and the cytochrome b6-f complex in photosystem I. This Fritillaria agrestis (Stinkbells) protein is Plastocyanin, chloroplastic (PETE).